A 316-amino-acid chain; its full sequence is Cuticle collagen 12 (316 aa).

Positions 1 to 36 are cleaved as a signal peptide; it reads MTEDPKQIAQETESLRKVAFFGIAVSTIATLTAIIA. Low complexity-rich tracts occupy residues 127 to 157 and 183 to 204; these read SGAAGPAGSPGQDGAPGNDGAPGAPGNPGQD and APGQKGPSGAPGAPGQSGGAAL. Residues 127–316 are disordered; that stretch reads SGAAGPAGSP…CPPPRTAPGY (190 aa). Triple-helical region regions lie at residues 128–157, 176–202, 206–235, 240–266, and 269–304; these read GAAGPAGSPGQDGAPGNDGAPGAPGNPGQD, GPPGPSGAPGQKGPSGAPGAPGQSGGA, GPPGPAGPPGPAGQPGSNGNAGAPGAPGQV, GTPGPAGPPGSPGPAGAPGQPGQAGSS, and GGPGPQGDAGAPGAPGAPGQAGAPGQDGESGSEGAC. Residues 205–217 show a composition bias toward pro residues; it reads PGPPGPAGPPGPA. Over residues 219 to 234 the composition is skewed to low complexity; it reads QPGSNGNAGAPGAPGQ. Positions 241–251 are enriched in pro residues; sequence TPGPAGPPGSP. 2 stretches are compositionally biased toward low complexity: residues 256-266 and 276-295; these read APGQPGQAGSS and DAGAPGAPGAPGQAGAPGQD. Over residues 307 to 316 the composition is skewed to pro residues; sequence CPPPRTAPGY.

It belongs to the cuticular collagen family. In terms of assembly, collagen polypeptide chains are complexed within the cuticle by disulfide bonds and other types of covalent cross-links.

Nematode cuticles are composed largely of collagen-like proteins. The cuticle functions both as an exoskeleton and as a barrier to protect the worm from its environment. This chain is Cuticle collagen 12 (col-12), found in Caenorhabditis elegans.